A 263-amino-acid polypeptide reads, in one-letter code: Cytochrome c oxidase subunit 3 (263 aa).

7 helical membrane-spanning segments follow: residues 7 to 27 (ITVL…KAHL), 44 to 64 (FSVG…VYSI), 78 to 98 (GMLS…WGIL), 120 to 140 (LILT…CLQF), 145 to 165 (GMSL…ECFA), 191 to 211 (VTGL…IYFI), and 241 to 261 (ITIL…YFFY).

The protein belongs to the cytochrome c oxidase subunit 3 family. As to quaternary structure, component of the cytochrome c oxidase (complex IV, CIV), a multisubunit enzyme composed of a catalytic core of 3 subunits and several supernumerary subunits. The complex exists as a monomer or a dimer and forms supercomplexes (SCs) in the inner mitochondrial membrane with ubiquinol-cytochrome c oxidoreductase (cytochrome b-c1 complex, complex III, CIII).

The protein localises to the mitochondrion inner membrane. It carries out the reaction 4 Fe(II)-[cytochrome c] + O2 + 8 H(+)(in) = 4 Fe(III)-[cytochrome c] + 2 H2O + 4 H(+)(out). In terms of biological role, component of the cytochrome c oxidase, the last enzyme in the mitochondrial electron transport chain which drives oxidative phosphorylation. The respiratory chain contains 3 multisubunit complexes succinate dehydrogenase (complex II, CII), ubiquinol-cytochrome c oxidoreductase (cytochrome b-c1 complex, complex III, CIII) and cytochrome c oxidase (complex IV, CIV), that cooperate to transfer electrons derived from NADH and succinate to molecular oxygen, creating an electrochemical gradient over the inner membrane that drives transmembrane transport and the ATP synthase. Cytochrome c oxidase is the component of the respiratory chain that catalyzes the reduction of oxygen to water. Electrons originating from reduced cytochrome c in the intermembrane space (IMS) are transferred via the dinuclear copper A center (CU(A)) of subunit 2 and heme A of subunit 1 to the active site in subunit 1, a binuclear center (BNC) formed by heme A3 and copper B (CU(B)). The BNC reduces molecular oxygen to 2 water molecules using 4 electrons from cytochrome c in the IMS and 4 protons from the mitochondrial matrix. This chain is Cytochrome c oxidase subunit 3 (COIII), found in Plasmodium vivax.